A 175-amino-acid chain; its full sequence is MGKITFYEDRAFQGRSYECTTDCPNLQPYFSRCNSIRVESGCWMIYERPNYQGHQYFLRRGEYPDYQQWMGLSDSIRSCCLIPPHSGAYRMKIYDRDELRGQMSELTDDCISVQDRFHLTEIHSLNVLEGSWILYEMPNYRGRQYLLRPGEYRRFLDWGAPNAKVGSLRRVMDLY.

2 consecutive Beta/gamma crystallin 'Greek key' domains span residues glycine 2–serine 40 and glycine 41–proline 83. The interval proline 84–alanine 88 is connecting peptide. Beta/gamma crystallin 'Greek key' domains follow at residues tyrosine 89 to glutamate 129 and glycine 130 to methionine 172.

It belongs to the beta/gamma-crystallin family. Monomer.

Functionally, crystallins are the dominant structural components of the vertebrate eye lens. The protein is Gamma-crystallin B (CRYGB) of Homo sapiens (Human).